The chain runs to 476 residues: tRNA-2-methylthio-N(6)-dimethylallyladenosine synthase (476 aa).

An MTTase N-terminal domain is found at 5-122 (KKLYIKTWGC…LPEMINQVKG (118 aa)). The [4Fe-4S] cluster site is built by C14, C51, C85, C159, C163, and C166. A Radical SAM core domain is found at 145–377 (RAEGPSAFVS…QQRINQQAMS (233 aa)). The TRAM domain maps to 380 to 443 (RAMLGSVQRI…ANSLRGKVIR (64 aa)).

This sequence belongs to the methylthiotransferase family. MiaB subfamily. In terms of assembly, monomer. [4Fe-4S] cluster is required as a cofactor.

Its subcellular location is the cytoplasm. The enzyme catalyses N(6)-dimethylallyladenosine(37) in tRNA + (sulfur carrier)-SH + AH2 + 2 S-adenosyl-L-methionine = 2-methylsulfanyl-N(6)-dimethylallyladenosine(37) in tRNA + (sulfur carrier)-H + 5'-deoxyadenosine + L-methionine + A + S-adenosyl-L-homocysteine + 2 H(+). Functionally, catalyzes the methylthiolation of N6-(dimethylallyl)adenosine (i(6)A), leading to the formation of 2-methylthio-N6-(dimethylallyl)adenosine (ms(2)i(6)A) at position 37 in tRNAs that read codons beginning with uridine. This Photorhabdus laumondii subsp. laumondii (strain DSM 15139 / CIP 105565 / TT01) (Photorhabdus luminescens subsp. laumondii) protein is tRNA-2-methylthio-N(6)-dimethylallyladenosine synthase.